The sequence spans 91 residues: MEPIPKLLAGLLLLTLCVVGCSSQHWSYGLRPGGKRNAENVIDSFQEMAKEVARLAEPQRFECTAHQPRSPLRDLKGALESLIEEETGQKT.

The first 23 residues, 1 to 23 (MEPIPKLLAGLLLLTLCVVGCSS), serve as a signal peptide directing secretion. Position 24 is a pyrrolidone carboxylic acid (Gln-24). A Glycine amide modification is found at Gly-33.

The protein belongs to the GnRH family. The precursor is cleaved by ACE, which removes the Gly-Lys-Arg peptide at the C-terminus, leading to mature hormone. The mature form of Gonadoliberin-1 is also cleaved and degraded by ACE.

It localises to the secreted. Its function is as follows. Stimulates the secretion of gonadotropins; it stimulates the secretion of both luteinizing and follicle-stimulating hormones. The protein is Progonadoliberin-1 (GNRH1) of Sus scrofa (Pig).